The chain runs to 188 residues: dCTP deaminase (188 aa).

109 to 114 (KSTYAR) contacts dCTP. The active-site Proton donor/acceptor is E135. DCTP contacts are provided by Q154, Y168, and Q178.

The protein belongs to the dCTP deaminase family. Homotrimer.

The enzyme catalyses dCTP + H2O + H(+) = dUTP + NH4(+). It participates in pyrimidine metabolism; dUMP biosynthesis; dUMP from dCTP (dUTP route): step 1/2. Its function is as follows. Catalyzes the deamination of dCTP to dUTP. This Helicobacter hepaticus (strain ATCC 51449 / 3B1) protein is dCTP deaminase.